Here is a 970-residue protein sequence, read N- to C-terminus: MDRGLSTGAHQGDDGLRERTVASQSSSAPGLEALTATGEGEVKDKAGKGKKTYGRTPGGKVFTVPQTHDMVSQLLSPSEPKNLSDIIVLVILAAHILLLWRLPAGAKVPVFAFIYLFWRGAYNAGIGWLLHNQSNHRTLVRWAEKTKIFVNPATGQNSHANLYKLIKRELKTKIPADYSFEDAPIEYNTWLVFRRLVDLILMCDFTSYCLFAIACSQRPLDEGTLMTALRWSAGIILVLFNLWVKLDAHRVVKDYAWYWGDFFFLIDQELTFDGVFEMAPHPMYSVGYAGYYGISLMAASYKVLFISILAHAAQFAFLVFVENPHIEKTYNPPPPRKRTIDQENVSITPQRSDSPSAPAPLDEQVPHAPSYSSGPPPSVHNLLGFRNLDLYRTIDTSSILIQFLVFALTVLTPSTPWFQFLFVANAAVWRIWYSVGIGLVLDRQSNCKAWTRHFVKYGESPQEAWNQWKGTYHISMVMCYASFIAAVWKMYSFPADWGYGLVLLRHVLGAGLIALQIWTSVSIYESLGEFGWFYGDFFFDESPKLTYDGIYRFLNNPERVLGLAGVWGAVLITSSGAVTFLALMSHILSLGFIQFVERPHMQKLYGRSLRRDAGLTKSLKRSLPPSLQQLHGSVDKIFDESFEFIEELIDTARPKLAAGVNTFVKDTSALFQKYPARVTISRIDEDLAGYDSRDYSLEVEGTDSLSPNDNDQSGREGANARMPLDRRGDLKNLVFEYGSPIKVKWTAPLNHSKKDWIGLYRVTDNTSREVTRVSSQGRWIAVNEGSYDNLTCEKGIVSSDILIPASQRKDNENRDLASGEVIFSGDKLFWTQGVFEFRYHHNGKHNVMAISRPFEIRISRFDEDEIPLMDPTSVELSLFPVVRNCFDRDPQIAPETVDEPFGSLVERDGRYAKRIVFAVHQMFGIEFAPEVVKADGNVHNLARRICNAKRVLAPYSLTKNGATTPTEGKE.

Residues 1–59 (MDRGLSTGAHQGDDGLRERTVASQSSSAPGLEALTATGEGEVKDKAGKGKKTYGRTPGG) are disordered. At 1–85 (MDRGLSTGAH…SPSEPKNLSD (85 aa)) the chain is on the lumenal side. Positions 11 to 20 (QGDDGLRERT) are enriched in basic and acidic residues. Residues 86 to 106 (IIVLVILAAHILLLWRLPAGA) form a helical membrane-spanning segment. Residues 107–109 (KVP) are Cytoplasmic-facing. A helical membrane pass occupies residues 110-130 (VFAFIYLFWRGAYNAGIGWLL). Topologically, residues 131 to 195 (HNQSNHRTLV…EYNTWLVFRR (65 aa)) are lumenal. The chain crosses the membrane as a helical span at residues 196-216 (LVDLILMCDFTSYCLFAIACS). Residues 217-223 (QRPLDEG) are Cytoplasmic-facing. A helical membrane pass occupies residues 224–244 (TLMTALRWSAGIILVLFNLWV). Residues 245–277 (KLDAHRVVKDYAWYWGDFFFLIDQELTFDGVFE) lie on the Lumenal side of the membrane. Residues 278 to 298 (MAPHPMYSVGYAGYYGISLMA) traverse the membrane as a helical segment. The Cytoplasmic segment spans residues 299 to 300 (AS). A helical transmembrane segment spans residues 301-321 (YKVLFISILAHAAQFAFLVFV). Residues 322-389 (ENPHIEKTYN…HNLLGFRNLD (68 aa)) are Lumenal-facing. The tract at residues 330-375 (YNPPPPRKRTIDQENVSITPQRSDSPSAPAPLDEQVPHAPSYSSGP) is disordered. The segment covering 342–355 (QENVSITPQRSDSP) has biased composition (polar residues). Residues 390 to 411 (LYRTIDTSSILIQFLVFALTVL) form a helical membrane-spanning segment. The Cytoplasmic portion of the chain corresponds to 412–416 (TPSTP). A helical membrane pass occupies residues 417–441 (WFQFLFVANAAVWRIWYSVGIGLVL). At 442-473 (DRQSNCKAWTRHFVKYGESPQEAWNQWKGTYH) the chain is on the lumenal side. A helical transmembrane segment spans residues 474–494 (ISMVMCYASFIAAVWKMYSFP). Residues 495 to 496 (AD) lie on the Cytoplasmic side of the membrane. A helical transmembrane segment spans residues 497-517 (WGYGLVLLRHVLGAGLIALQI). The Lumenal segment spans residues 518–562 (WTSVSIYESLGEFGWFYGDFFFDESPKLTYDGIYRFLNNPERVLG). The chain crosses the membrane as a helical span at residues 563–583 (LAGVWGAVLITSSGAVTFLAL). The Cytoplasmic segment spans residues 584-970 (MSHILSLGFI…GATTPTEGKE (387 aa)). A disordered region spans residues 698–722 (EVEGTDSLSPNDNDQSGREGANARM).

The protein belongs to the class VI-like SAM-binding methyltransferase superfamily. CHO2 family.

Its subcellular location is the endoplasmic reticulum membrane. The enzyme catalyses a 1,2-diacyl-sn-glycero-3-phosphoethanolamine + S-adenosyl-L-methionine = a 1,2-diacyl-sn-glycero-3-phospho-N-methylethanolamine + S-adenosyl-L-homocysteine + H(+). The protein operates within phospholipid metabolism; phosphatidylcholine biosynthesis. Catalyzes the first step of the methylation pathway of phosphatidylcholine biosynthesis, the SAM-dependent methylation of phosphatidylethanolamine (PE) to phosphatidylmonomethylethanolamine (PMME). This Neosartorya fischeri (strain ATCC 1020 / DSM 3700 / CBS 544.65 / FGSC A1164 / JCM 1740 / NRRL 181 / WB 181) (Aspergillus fischerianus) protein is Phosphatidylethanolamine N-methyltransferase (CHO2).